The sequence spans 207 residues: Ribonuclease HII (207 aa).

The 190-residue stretch at 12–201 (DLVAGVDEVG…VRAAWEVREG (190 aa)) folds into the RNase H type-2 domain. A divalent metal cation-binding residues include Asp-18, Glu-19, and Asp-110.

Belongs to the RNase HII family. The cofactor is Mn(2+). It depends on Mg(2+) as a cofactor.

The protein localises to the cytoplasm. The catalysed reaction is Endonucleolytic cleavage to 5'-phosphomonoester.. In terms of biological role, endonuclease that specifically degrades the RNA of RNA-DNA hybrids. This Pseudomonas putida (strain ATCC 700007 / DSM 6899 / JCM 31910 / BCRC 17059 / LMG 24140 / F1) protein is Ribonuclease HII.